A 371-amino-acid chain; its full sequence is 4-hydroxy-3-methylbut-2-en-1-yl diphosphate synthase (flavodoxin) (371 aa).

The [4Fe-4S] cluster site is built by cysteine 268, cysteine 271, cysteine 303, and glutamate 310.

Belongs to the IspG family. Requires [4Fe-4S] cluster as cofactor.

The enzyme catalyses (2E)-4-hydroxy-3-methylbut-2-enyl diphosphate + oxidized [flavodoxin] + H2O + 2 H(+) = 2-C-methyl-D-erythritol 2,4-cyclic diphosphate + reduced [flavodoxin]. The protein operates within isoprenoid biosynthesis; isopentenyl diphosphate biosynthesis via DXP pathway; isopentenyl diphosphate from 1-deoxy-D-xylulose 5-phosphate: step 5/6. Functionally, converts 2C-methyl-D-erythritol 2,4-cyclodiphosphate (ME-2,4cPP) into 1-hydroxy-2-methyl-2-(E)-butenyl 4-diphosphate. The sequence is that of 4-hydroxy-3-methylbut-2-en-1-yl diphosphate synthase (flavodoxin) from Macrococcus caseolyticus (strain JCSC5402) (Macrococcoides caseolyticum).